A 296-amino-acid polypeptide reads, in one-letter code: Homeobox protein SIX2 (296 aa).

The segment at residues 124–183 is a DNA-binding region (homeobox); it reads GEETSYCFKEKSRSVLREWYAHNPYPSPREKRELAEATGLTTTQVSNWFKNRRQRDRAAE. The interval 168-284 is disordered; sequence VSNWFKNRRQ…HHHSLQDSIL (117 aa). The span at 179–190 shows a compositional bias: basic and acidic residues; it reads DRAAEAKERENS. Low complexity-rich tracts occupy residues 191–206 and 228–237; these read ENSN…SSLN and HSSSSPALLL. Over residues 254-264 the composition is skewed to pro residues; the sequence is PPGPSAVPVPV.

It belongs to the SIX/Sine oculis homeobox family. As to quaternary structure, interacts with TCF7L2; in a canonical Wnt signaling independent manner; prevents transcription of differentiation genes in cap mesenchyme. Interacts with OSR1; form a strong repressor complex with TCF7L2, TLE2 and TLE3 to prevent the activation of Wnt/beta-catenin target genes in the cap mesenchyme. Interacts with HOXA11, EYA1 and EYA3. In terms of tissue distribution, expressed in phalangeal tendons, in smooth muscle and in head and body mesenchyme.

The protein resides in the nucleus. Transcription factor that plays an important role in the development of several organs, including kidney, skull and stomach. During kidney development, maintains cap mesenchyme multipotent nephron progenitor cells in an undifferentiated state by opposing the inductive signals emanating from the ureteric bud and cooperates with WNT9B to promote renewing progenitor cells proliferation. Acts through its interaction with TCF7L2 and OSR1 in a canonical Wnt signaling independent manner preventing transcription of differentiation genes in cap mesenchyme such as WNT4. Also acts independently of OSR1 to activate expression of many cap mesenchyme genes, including itself, GDNF and OSR1. During craniofacial development plays a role in growth and elongation of the cranial base through regulation of chondrocyte differentiation. During stomach organogenesis, controls pyloric sphincter formation and mucosal growth through regulation of a gene network including NKX2-5, BMPR1B, BMP4, SOX9 and GREM1. During branchial arch development, acts to mediate HOXA2 control over the insulin-like growth factor pathway. May also be involved in limb tendon and ligament development. Plays a role in cell proliferation and migration. The protein is Homeobox protein SIX2 (Six2) of Mus musculus (Mouse).